The following is a 253-amino-acid chain: Indole-3-glycerol phosphate synthase (253 aa).

Belongs to the TrpC family.

The enzyme catalyses 1-(2-carboxyphenylamino)-1-deoxy-D-ribulose 5-phosphate + H(+) = (1S,2R)-1-C-(indol-3-yl)glycerol 3-phosphate + CO2 + H2O. It participates in amino-acid biosynthesis; L-tryptophan biosynthesis; L-tryptophan from chorismate: step 4/5. In Bacillus thuringiensis (strain Al Hakam), this protein is Indole-3-glycerol phosphate synthase.